Consider the following 341-residue polypeptide: Aromatic amino acid aminotransferase (341 aa).

Position 213 is an N6-(pyridoxal phosphate)lysine (Lys-213).

Belongs to the class-II pyridoxal-phosphate-dependent aminotransferase family. Homodimer. Pyridoxal 5'-phosphate serves as cofactor.

It catalyses the reaction an aromatic L-alpha-amino acid + 2-oxoglutarate = an aromatic oxo-acid + L-glutamate. Its function is as follows. Aminotransferase that catalyzes the conversion of aromatic amino acids and 2-oxoglutarate into corresponding aromatic oxo acids and L-glutamate. The chain is Aromatic amino acid aminotransferase from Corynebacterium glutamicum (strain R).